Consider the following 917-residue polypeptide: Protein translocase subunit SecA (917 aa).

ATP-binding positions include Gln87, 105–109 (GEGKT), and Asp501. 4 residues coordinate Zn(2+): Cys901, Cys903, Cys912, and His913.

It belongs to the SecA family. As to quaternary structure, monomer and homodimer. Part of the essential Sec protein translocation apparatus which comprises SecA, SecYEG and auxiliary proteins SecDF-YajC and YidC. It depends on Zn(2+) as a cofactor.

Its subcellular location is the cell inner membrane. It localises to the cytoplasm. It carries out the reaction ATP + H2O + cellular proteinSide 1 = ADP + phosphate + cellular proteinSide 2.. Part of the Sec protein translocase complex. Interacts with the SecYEG preprotein conducting channel. Has a central role in coupling the hydrolysis of ATP to the transfer of proteins into and across the cell membrane, serving both as a receptor for the preprotein-SecB complex and as an ATP-driven molecular motor driving the stepwise translocation of polypeptide chains across the membrane. In Granulibacter bethesdensis (strain ATCC BAA-1260 / CGDNIH1), this protein is Protein translocase subunit SecA.